A 493-amino-acid chain; its full sequence is MQFSFSNDLGTLFTIILAIGFIINLVLAFIIIFLERNRRTASSTWAWLFVLFVLPLIGFILYLFFGRTVSARKLNKNNGNVLTDFDGLLKQQIESFDKGNYGTDNKQVQKHHDLVRMLLMDQDGFLTENNKVDHFIDGNDLYDQVLKDIKNAKEYIHLEYYTFALDGLGKRILHALEEKLKQGLEVKILYDDVGSKNVKMANFDHFKSLGGEVEAFFASKLPLLNFRMNNRNHRKIIIIDGQLGYVGGFNIGDEYLGLGKLGYWRDTHLRIQGDAVDALQLRFILDWNSQAHRPQFEYDVKYFPKKNGPLGNSPIQIAASGPASDWHQIEYGYTKMIMSAKKSVYLQSPYFIPDNSYINAIKIAAKSGVDVHLMIPCKPDHPLVYWATFSNASDLLSSGVKIYTYENGFIHSKMCLIDDEIVSVGTANMDFRSFELNFEVNAFVYDENLAKDLRVAYEHDITKSKQLTEESYANRPLSVKFKESLAKLVSPIL.

Transmembrane regions (helical) follow at residues F13–F33 and W45–F65. 2 PLD phosphodiesterase domains span residues M228–Y255 and E406–S433. Catalysis depends on residues H233, K235, D240, H411, K413, and D418.

This sequence belongs to the phospholipase D family. Cardiolipin synthase subfamily.

The protein localises to the cell membrane. The catalysed reaction is 2 a 1,2-diacyl-sn-glycero-3-phospho-(1'-sn-glycerol) = a cardiolipin + glycerol. Its function is as follows. Catalyzes the reversible phosphatidyl group transfer from one phosphatidylglycerol molecule to another to form cardiolipin (CL) (diphosphatidylglycerol) and glycerol. The sequence is that of Cardiolipin synthase 1 (cls1) from Staphylococcus aureus (strain MRSA252).